The sequence spans 255 residues: Undecaprenyl-diphosphatase (255 aa).

The next 6 membrane-spanning stretches (helical) occupy residues 1-21, 75-95, 96-116, 174-194, 203-223, and 234-254; these read MDIIQVIVLSIIEGITEFLPI, IIISFIPVGIMGLLFHKIVYQ, LFTVQIVATAFIVGGIIFLIV, TEFSFLGALPVMLAASLFDIV, GDISNLVVGFIVSFFMALITI, and NFVPFGIYRILFGVILLMFFV.

Belongs to the UppP family.

The protein resides in the cell membrane. The catalysed reaction is di-trans,octa-cis-undecaprenyl diphosphate + H2O = di-trans,octa-cis-undecaprenyl phosphate + phosphate + H(+). Its function is as follows. Catalyzes the dephosphorylation of undecaprenyl diphosphate (UPP). The chain is Undecaprenyl-diphosphatase from Methanococcus aeolicus (strain ATCC BAA-1280 / DSM 17508 / OCM 812 / Nankai-3).